The chain runs to 644 residues: 3D-(3,5/4)-trihydroxycyclohexane-1,2-dione hydrolase 1 (644 aa).

A thiamine diphosphate-binding site is contributed by Glu-65. The tract at residues 442-522 (SLPGDLQRMW…INVLLFDNSG (81 aa)) is thiamine pyrophosphate binding. Mg(2+) is bound by residues Asp-493 and Asn-520.

Belongs to the TPP enzyme family. Requires Mg(2+) as cofactor. The cofactor is thiamine diphosphate.

The catalysed reaction is 3D-3,5/4-trihydroxycyclohexane-1,2-dione + H2O = 5-deoxy-D-glucuronate + H(+). It participates in polyol metabolism; myo-inositol degradation into acetyl-CoA; acetyl-CoA from myo-inositol: step 3/7. Its function is as follows. Involved in the cleavage of the C1-C2 bond of 3D-(3,5/4)-trihydroxycyclohexane-1,2-dione (THcHDO) to yield 5-deoxy-glucuronate (5DG). This is 3D-(3,5/4)-trihydroxycyclohexane-1,2-dione hydrolase 1 from Bacillus cereus (strain ZK / E33L).